A 187-amino-acid chain; its full sequence is MIDSANRADVFLRKPAPVAPELQHEVEQFYYWEAKLLNDRRFEEWFALLAEDIHYFMPIRTTRIMRDSRLEYSGSREYAHFDDDATMMKGRLRKITSDVSWSENPASRTRHLVSNVMIVGAEAEGEYEISSAFIVYRNRLERQLDIFAGERRDTLRRNTSEAGFEIVNRTILIDQSTILANNLSFFF.

It belongs to the bacterial ring-hydroxylating dioxygenase beta subunit family. In terms of assembly, this dioxygenase system consists of four proteins: the two subunits of the hydroxylase component (BnzA and BnzB), a ferredoxin (BnzC) and a ferredoxin reductase (BnzD). Requires [2Fe-2S] cluster as cofactor. The cofactor is Fe cation.

The enzyme catalyses benzene + NADH + O2 + H(+) = cis-1,2-dihydrobenzene-1,2-diol + NAD(+). It carries out the reaction toluene + NADH + O2 + H(+) = (1S,2R)-3-methylcyclohexa-3,5-diene-1,2-diol + NAD(+). It functions in the pathway aromatic compound metabolism; benzene degradation; catechol from benzene: step 1/2. The protein operates within xenobiotic degradation; toluene degradation. It participates in xenobiotic degradation; xylene degradation. Its function is as follows. Catalyzes both the oxidation of benzene and toluene. The beta subunit may be responsible for the substrate specificity of the enzyme. The protein is Benzene 1,2-dioxygenase subunit beta (bnzB) of Pseudomonas putida (strain ATCC 700007 / DSM 6899 / JCM 31910 / BCRC 17059 / LMG 24140 / F1).